The chain runs to 430 residues: Citrate synthase (430 aa).

Catalysis depends on residues H305 and D363.

It belongs to the citrate synthase family. In terms of assembly, homohexamer.

It catalyses the reaction oxaloacetate + acetyl-CoA + H2O = citrate + CoA + H(+). The protein operates within carbohydrate metabolism; tricarboxylic acid cycle; isocitrate from oxaloacetate: step 1/2. Its activity is regulated as follows. Allosterically inhibited by NADH. The protein is Citrate synthase (gltA) of Coxiella burnetii (strain RSA 493 / Nine Mile phase I).